Here is a 360-residue protein sequence, read N- to C-terminus: MTTIQQQRTSLLKGWPQFCEWVTSTNNRIYVGWFGVLMIPCLLAAAACFIVAFIAAPPVDIDGIREPVAGSFLYGNNIISGAVVPSSNAIGLHFYPIWEAATVDEWLYNGGPYQLVIFHFLIGISAYMGRQWELSYRLGMRPWICVAYSAPVSAAFAVFLVYPFGQGSFSDGMPLGISGTFNFMFVFQAEHNILMHPFHMAGVAGMFGGSLFSAMHGSLVTSSLIRETTETESQNYGYKFGQEEETYNIVAAHGYFGRLIFQYASFNNSRSLHFFLAVFPVVCVWLTSMGICTMAFNLNGFNFNQSVVDANGKIVPTWGDVLNRANLGMEVMHERNAHNFPLDLAAAESTTVALTAPAIG.

Helical transmembrane passes span 30 to 47, 119 to 134, and 143 to 157; these read YVGW…AAAA, HFLI…QWEL, and WICV…AAFA. Position 119 (His-119) interacts with chlorophyll a. Tyr-127 provides a ligand contact to pheophytin a. Asp-171 and Glu-190 together coordinate [CaMn4O5] cluster. The helical transmembrane segment at 198 to 219 threads the bilayer; the sequence is FHMAGVAGMFGGSLFSAMHGSL. His-199 serves as a coordination point for chlorophyll a. A quinone contacts are provided by residues His-216 and 265 to 266; that span reads SF. His-216 provides a ligand contact to Fe cation. A Fe cation-binding site is contributed by His-273. A helical membrane pass occupies residues 275-289; it reads FLAVFPVVCVWLTSM. [CaMn4O5] cluster contacts are provided by His-333, Glu-334, Asp-343, and Ala-345. Residues 346-360 constitute a propeptide that is removed on maturation; the sequence is AAESTTVALTAPAIG.

Belongs to the reaction center PufL/M/PsbA/D family. In terms of assembly, PSII is composed of 1 copy each of membrane proteins PsbA, PsbB, PsbC, PsbD, PsbE, PsbF, PsbH, PsbI, PsbJ, PsbK, PsbL, PsbM, PsbT, PsbX, PsbY, Psb30/Ycf12, peripheral proteins PsbO, CyanoQ (PsbQ), PsbU, PsbV and a large number of cofactors. It forms dimeric complexes. The D1/D2 heterodimer binds P680, chlorophylls that are the primary electron donor of PSII, and subsequent electron acceptors. It shares a non-heme iron and each subunit binds pheophytin, quinone, additional chlorophylls, carotenoids and lipids. D1 provides most of the ligands for the Mn4-Ca-O5 cluster of the oxygen-evolving complex (OEC). There is also a Cl(-1) ion associated with D1 and D2, which is required for oxygen evolution. The PSII complex binds additional chlorophylls, carotenoids and specific lipids. is required as a cofactor. In terms of processing, tyr-162 forms a radical intermediate that is referred to as redox-active TyrZ, YZ or Y-Z. C-terminally processed by CtpA; processing is essential to allow assembly of the oxygen-evolving complex and thus photosynthetic growth.

Its subcellular location is the cellular thylakoid membrane. The catalysed reaction is 2 a plastoquinone + 4 hnu + 2 H2O = 2 a plastoquinol + O2. Photosystem II (PSII) is a light-driven water:plastoquinone oxidoreductase that uses light energy to abstract electrons from H(2)O, generating O(2) and a proton gradient subsequently used for ATP formation. It consists of a core antenna complex that captures photons, and an electron transfer chain that converts photonic excitation into a charge separation. The D1/D2 (PsbA/PsbD) reaction center heterodimer binds P680, the primary electron donor of PSII as well as several subsequent electron acceptors. This Prochlorococcus marinus (strain MIT 9515) protein is Photosystem II protein D1.